The chain runs to 433 residues: Tol-Pal system protein TolB (433 aa).

The signal sequence occupies residues 1–21 (MINLFRGLLVVLCFASAMVAA).

The protein belongs to the TolB family. The Tol-Pal system is composed of five core proteins: the inner membrane proteins TolA, TolQ and TolR, the periplasmic protein TolB and the outer membrane protein Pal. They form a network linking the inner and outer membranes and the peptidoglycan layer.

The protein localises to the periplasm. In terms of biological role, part of the Tol-Pal system, which plays a role in outer membrane invagination during cell division and is important for maintaining outer membrane integrity. The polypeptide is Tol-Pal system protein TolB (Pseudomonas syringae pv. tomato (strain ATCC BAA-871 / DC3000)).